The primary structure comprises 351 residues: Biotin synthase (351 aa).

Residues 48–265 (NKVRIHILDN…LCMFRLINPD (218 aa)) enclose the Radical SAM core domain. Residues C63, C67, and C70 each contribute to the [4Fe-4S] cluster site. 4 residues coordinate [2Fe-2S] cluster: C107, C139, C199, and R269.

It belongs to the radical SAM superfamily. Biotin synthase family. Homodimer. It depends on [4Fe-4S] cluster as a cofactor. Requires [2Fe-2S] cluster as cofactor.

It catalyses the reaction (4R,5S)-dethiobiotin + (sulfur carrier)-SH + 2 reduced [2Fe-2S]-[ferredoxin] + 2 S-adenosyl-L-methionine = (sulfur carrier)-H + biotin + 2 5'-deoxyadenosine + 2 L-methionine + 2 oxidized [2Fe-2S]-[ferredoxin]. Its pathway is cofactor biosynthesis; biotin biosynthesis; biotin from 7,8-diaminononanoate: step 2/2. Its function is as follows. Catalyzes the conversion of dethiobiotin (DTB) to biotin by the insertion of a sulfur atom into dethiobiotin via a radical-based mechanism. In Leptospira interrogans serogroup Icterohaemorrhagiae serovar Lai (strain 56601), this protein is Biotin synthase.